The following is a 431-amino-acid chain: MAVAVGRPSNEELRNLSLSGHVGFDSLPDQLVNKSTSQGFCFNILCVGETGIGKSTLMDTLFNTKFESDPATHNEPGVRLKARSYELQESNVRLKLTIVDTVGFGDQINKDDSYKPIVEYIDAQFEAYLQEELKIKRSLFNYHDTRIHACLYFIAPTGHSLKSLDLVTMKKLDSKVNIIPIIAKADTIAKNELHKFKSKIMSELVSNGVQIYQFPTDEETVAEINATMSVHLPFAVVGSTEEVKIGNKMAKARQYPWGVVQVENENHCDFVKLREMLIRVNMEDLREQTHTRHYELYRRCKLEEMGFKDTDPDSKPFSLQETYEAKRNEFLGELQKKEEEMRQMFVMRVKEKEAELKEAEKELHEKFDLLKRTHQEEKKKVEDKKKELEEEVSNFQKKKAAAQLLQSQAQQSGAQQTKKDKDKKNPWLCTE.

At alanine 2 the chain carries N-acetylalanine. At serine 9 the chain carries Phosphoserine. A Septin-type G domain is found at 38 to 304 (QGFCFNILCV…ELYRRCKLEE (267 aa)). The segment at 48-55 (GETGIGKS) is G1 motif. Residues 48-55 (GETGIGKS), glycine 103, 184-192 (KADTIAKNE), glycine 238, and arginine 253 contribute to the GTP site. Residues 100 to 103 (DTVG) form a G3 motif region. Residues 183 to 186 (AKAD) are G4 motif. Positions 320 to 413 (QETYEAKRNE…LLQSQAQQSG (94 aa)) form a coiled coil. The segment at 400–431 (AAAQLLQSQAQQSGAQQTKKDKDKKNPWLCTE) is disordered. Residues 401 to 416 (AAQLLQSQAQQSGAQQ) show a composition bias toward low complexity.

The protein belongs to the TRAFAC class TrmE-Era-EngA-EngB-Septin-like GTPase superfamily. Septin GTPase family. As to quaternary structure, septins polymerize into heterooligomeric protein complexes that form filaments, and can associate with cellular membranes, actin filaments and microtubules. Forms homooligomers. GTPase activity is required for filament formation. Interacts with SEPTIN7, SEPTIN9 and SEPTIN12. In terms of tissue distribution, expressed in the cerebral cortex (at protein level).

It localises to the cytoplasm. The protein localises to the cytoskeleton. The protein resides in the synapse. It is found in the cell projection. Its subcellular location is the dendritic spine. It localises to the axon. Its function is as follows. Filament-forming cytoskeletal GTPase. May play a role in cytokinesis (Potential). May play a role in the cytoarchitecture of neurons, including dendritic arborization and dendritic spines, and in GABAergic synaptic connectivity. In Mus musculus (Mouse), this protein is Septin-11.